The primary structure comprises 404 residues: MRGSVERGWGWGHCASSPLLLWTLLLFAAPFGLLGEKTRQLSLEVIPNWLGPLQNLLHIRAVGTNSTLHYVWSSLGPLAVVMVATNTPHSTLSVNWSRLLSPEPDGGLMVLPKDSIQFSSALVFTRLLEFDSTNVSNTAAKPPGRPYPPYSLADFSWNNITDSLPATLSATFQGHPMNDPTRTFANGSLAFRVQAFSRSSRPAQPPRLLHTADTCQLEVALVGASPRGNHSLFGLEVATLGQGPDCPSMQEQHSIDDEYAPAVFQLDQLLWGSLPAGFAQWRPVAYSQKPGGRESALPCQASPLHPALAYSLPQSPIVRAFFGSQNNFCAFNLTFGASTGPGYWDQHYLSWNAPGCGLPSSGRLVPTSPGHHGSALGAPGLMLLGGGLVLLLHHRKYSEYQSIN.

Residues 1–35 (MRGSVERGWGWGHCASSPLLLWTLLLFAAPFGLLG) form the signal peptide. At 36 to 371 (EKTRQLSLEV…GRLVPTSPGH (336 aa)) the chain is on the lumenal side. N-linked (GlcNAc...) asparagine glycosylation is found at Asn-65, Asn-134, Asn-159, Asn-186, and Asn-229. A helical transmembrane segment spans residues 372 to 392 (HGSALGAPGLMLLGGGLVLLL). At 393–404 (HHRKYSEYQSIN) the chain is on the cytoplasmic side. Positions 400–404 (YQSIN) match the Lysosomal targeting motif motif.

It belongs to the GLMP family. As to quaternary structure, interacts (via lumenal domain) with lysosomal protein MFSD1; the interaction starts while both proteins are still in the endoplasmic reticulum and is required for stabilization of MFSD1 in lysosomes but has no direct effect on its targeting to lysosomes or transporter activity. In terms of processing, highly N-glycosylated. N-glycosylation is essential for GLMP stability and for MFSD1 lysosomal localization.

It localises to the lysosome membrane. In terms of biological role, required to protect lysosomal transporter MFSD1 from lysosomal proteolysis and for MFSD1 lysosomal localization. The sequence is that of Glycosylated lysosomal membrane protein from Pongo abelii (Sumatran orangutan).